A 268-amino-acid chain; its full sequence is Formamidopyrimidine-DNA glycosylase (268 aa).

The active-site Schiff-base intermediate with DNA is the P2. Residue E3 is the Proton donor of the active site. Residue K56 is the Proton donor; for beta-elimination activity of the active site. The DNA site is built by H91, R110, and R149. An FPG-type zinc finger spans residues 234-268 (QVYGRFNQACPNCGQPLKRSRIGGRSSHYCEKCQQ). R258 acts as the Proton donor; for delta-elimination activity in catalysis.

It belongs to the FPG family. As to quaternary structure, monomer. Requires Zn(2+) as cofactor.

It carries out the reaction Hydrolysis of DNA containing ring-opened 7-methylguanine residues, releasing 2,6-diamino-4-hydroxy-5-(N-methyl)formamidopyrimidine.. The catalysed reaction is 2'-deoxyribonucleotide-(2'-deoxyribose 5'-phosphate)-2'-deoxyribonucleotide-DNA = a 3'-end 2'-deoxyribonucleotide-(2,3-dehydro-2,3-deoxyribose 5'-phosphate)-DNA + a 5'-end 5'-phospho-2'-deoxyribonucleoside-DNA + H(+). Its function is as follows. Involved in base excision repair of DNA damaged by oxidation or by mutagenic agents. Acts as a DNA glycosylase that recognizes and removes damaged bases. Has a preference for oxidized purines, such as 7,8-dihydro-8-oxoguanine (8-oxoG). Has AP (apurinic/apyrimidinic) lyase activity and introduces nicks in the DNA strand. Cleaves the DNA backbone by beta-delta elimination to generate a single-strand break at the site of the removed base with both 3'- and 5'-phosphates. The protein is Formamidopyrimidine-DNA glycosylase of Syntrophomonas wolfei subsp. wolfei (strain DSM 2245B / Goettingen).